A 332-amino-acid polypeptide reads, in one-letter code: MPKRRDILAIVLIVLPWTLLITVWHQSTLAPLLAVHKDEGSDPRRETPPGADPREYCMSDRDIVEVVRTEYVYTRPPPWSDTLPTIHVVTPTYSRPVQKAELTRMANTLLHVPNLHWLVVEDAPRRTPLTARLLRDTGLNYTHLHVETPRNYKLRGDARDPRIPRGTMQRNLALRWLRETFPRNSSQPGVVYFADDDNPYSLELFQKVTRRVSVWPVAFVGGLRYEAPRVNGAGKVVGWKTVFDPHRPFAIDMAGFAVNLRLILQRSQAYFKLRGVKGGYQESSLLRELVTLNDLEPKAANCTKILVWHTRTEKPVLVNEGKKGFTDPSVEI.

Residues 1-6 (MPKRRD) lie on the Cytoplasmic side of the membrane. Residues 3-5 (KRR) form an essential for transport from endoplasmic reticulum to Golgi apparatus and interaction with SAR1A region. The helical; Signal-anchor for type II membrane protein transmembrane segment at 7–27 (ILAIVLIVLPWTLLITVWHQS) threads the bilayer. The Lumenal segment spans residues 28 to 332 (TLAPLLAVHK…KGFTDPSVEI (305 aa)). 91–93 (PTY) lines the UDP-alpha-D-glucuronate pocket. A phosphothreonine mark is found at Thr103 and Thr108. Asp122 serves as a coordination point for UDP-alpha-D-glucuronate. N-linked (GlcNAc...) asparagine glycosylation is present at Asn140. UDP-alpha-D-glucuronate is bound by residues Arg165 and Arg170. N-linked (GlcNAc...) asparagine glycosylation is present at Asn184. UDP-alpha-D-glucuronate is bound at residue 195 to 197 (DDD). Asp197 is a binding site for Mn(2+). Residues 243 to 252 (FDPHRPFAID) form an interaction with galactose moiety of substrate glycoprotein region. Glu282 functions as the Proton donor/acceptor in the catalytic mechanism. A glycan (N-linked (GlcNAc...) asparagine) is linked at Asn301. Position 309–311 (309–311 (HTR)) interacts with UDP-alpha-D-glucuronate.

It belongs to the glycosyltransferase 43 family. Homodimer. Interacts with SAR1A. Mn(2+) serves as cofactor. Post-translationally, the soluble form derives from the membrane form by proteolytic processing.

It localises to the golgi apparatus membrane. It is found in the secreted. The catalysed reaction is 3-O-(beta-D-galactosyl-(1-&gt;3)-beta-D-galactosyl-(1-&gt;4)-beta-D-xylosyl)-L-seryl-[protein] + UDP-alpha-D-glucuronate = 3-O-(beta-D-GlcA-(1-&gt;3)-beta-D-Gal-(1-&gt;3)-beta-D-Gal-(1-&gt;4)-beta-D-Xyl)-L-seryl-[protein] + UDP + H(+). It participates in protein modification; protein glycosylation. Its function is as follows. Involved in the biosynthesis of L2/HNK-1 carbohydrate epitope on glycoproteins. Can also play a role in glycosaminoglycan biosynthesis. Substrates include asialo-orosomucoid (ASOR), asialo-fetuin, and asialo-neural cell adhesion molecule. Requires sphingomyelin for activity: stearoyl-sphingomyelin was the most effective, followed by palmitoyl-sphingomyelin and lignoceroyl-sphingomyelin. Activity was demonstrated only for sphingomyelin with a saturated fatty acid and not for that with an unsaturated fatty acid, regardless of the length of the acyl group. In Pan troglodytes (Chimpanzee), this protein is Galactosylgalactosylxylosylprotein 3-beta-glucuronosyltransferase 1.